The sequence spans 134 residues: D-ribose pyranase (134 aa).

His-20 serves as the catalytic Proton donor. Residues Asp-28, His-101, and 123-125 each bind substrate; that span reads YCN.

It belongs to the RbsD / FucU family. RbsD subfamily. In terms of assembly, homodecamer.

The protein resides in the cytoplasm. The enzyme catalyses beta-D-ribopyranose = beta-D-ribofuranose. The protein operates within carbohydrate metabolism; D-ribose degradation; D-ribose 5-phosphate from beta-D-ribopyranose: step 1/2. Catalyzes the interconversion of beta-pyran and beta-furan forms of D-ribose. In Pseudomonas fluorescens (strain SBW25), this protein is D-ribose pyranase.